A 417-amino-acid chain; its full sequence is Serine hydroxymethyltransferase (417 aa).

(6S)-5,6,7,8-tetrahydrofolate contacts are provided by residues Leu112 and 116-118 (GHL). At Lys221 the chain carries N6-(pyridoxal phosphate)lysine. Glu247 serves as a coordination point for (6S)-5,6,7,8-tetrahydrofolate.

Belongs to the SHMT family. As to quaternary structure, homodimer. Requires pyridoxal 5'-phosphate as cofactor.

It is found in the cytoplasm. It carries out the reaction (6R)-5,10-methylene-5,6,7,8-tetrahydrofolate + glycine + H2O = (6S)-5,6,7,8-tetrahydrofolate + L-serine. Its pathway is one-carbon metabolism; tetrahydrofolate interconversion. It functions in the pathway amino-acid biosynthesis; glycine biosynthesis; glycine from L-serine: step 1/1. Catalyzes the reversible interconversion of serine and glycine with tetrahydrofolate (THF) serving as the one-carbon carrier. This reaction serves as the major source of one-carbon groups required for the biosynthesis of purines, thymidylate, methionine, and other important biomolecules. Also exhibits THF-independent aldolase activity toward beta-hydroxyamino acids, producing glycine and aldehydes, via a retro-aldol mechanism. This is Serine hydroxymethyltransferase from Borrelia duttonii (strain Ly).